Here is a 1918-residue protein sequence, read N- to C-terminus: NFX1-type zinc finger-containing protein 1 (1918 aa).

The span at 1-12 (MEERRPHLDARP) shows a compositional bias: basic and acidic residues. Disordered regions lie at residues 1–58 (MEER…RANN) and 75–140 (RNPH…QPQQ). The segment covering 30–42 (RARNQANNPPANA) has biased composition (low complexity). The span at 82–105 (RNQEGHASDEARDQRHDQENDTRW) shows a compositional bias: basic and acidic residues. The span at 120-129 (SNDNFQQWRT) shows a compositional bias: polar residues. The stretch at 286-313 (DIEEETEKNLEKVQTIIEHLQEKRREGT) forms a coiled coil. Disordered regions lie at residues 796-819 (SVSPAGPENTAQAEGDEEEEGEEE) and 876-896 (TAAGQEQATGEWQTQRNQKKK). Residues 809–819 (EGDEEEEGEEE) are compositionally biased toward acidic residues. A compositionally biased stretch (polar residues) spans 877 to 887 (AAGQEQATGEW). Positions 886-967 (EWQTQRNQKK…TSAERMAELR (82 aa)) form a coiled coil. 6 NF-X1-type zinc fingers span residues 1298–1320 (CGHVCTRACHPYDSSHKEFQCMK), 1330–1346 (GHRCPLVCFQECQPCQV), 1382–1400 (CGHRCSHPCGEDCVQLCSE), 1441–1463 (CGHPCPGSCHSCFEGRFHERCQQ), 1471–1488 (CSHKCQEPCIGECPPCQR), and 1546–1564 (CGHPCIGLCGEPCPKKCRI). Residues 1741–1820 (LAKKRLSFTS…EKMEALKATL (80 aa)) are a coiled coil. The RZ-type zinc-finger motif lies at 1827 to 1898 (ISEEERVQIV…LASEMDGAQH (72 aa)). Residues cysteine 1849, histidine 1853, cysteine 1869, and cysteine 1872 each contribute to the Zn(2+) site.

This sequence belongs to the ZNFX1 family. Interacts with MAVS. In terms of tissue distribution, widely expressed.

The protein localises to the mitochondrion outer membrane. The protein resides in the cytoplasm. It localises to the stress granule. In terms of biological role, RNA-binding protein that initiates the antiviral response and is required to restrict the replication of RNA viruses. Acts as a double-stranded RNA (dsRNA) sensor that recognizes viral RNA and then interacts with MAVS to initiate the type I interferon response. Also required for immunity against some bacteria, such as mycobacteria. This Homo sapiens (Human) protein is NFX1-type zinc finger-containing protein 1.